A 345-amino-acid chain; its full sequence is Phosphoribosylformylglycinamidine cyclo-ligase (345 aa).

The protein belongs to the AIR synthase family.

It localises to the cytoplasm. It carries out the reaction 2-formamido-N(1)-(5-O-phospho-beta-D-ribosyl)acetamidine + ATP = 5-amino-1-(5-phospho-beta-D-ribosyl)imidazole + ADP + phosphate + H(+). It participates in purine metabolism; IMP biosynthesis via de novo pathway; 5-amino-1-(5-phospho-D-ribosyl)imidazole from N(2)-formyl-N(1)-(5-phospho-D-ribosyl)glycinamide: step 2/2. The chain is Phosphoribosylformylglycinamidine cyclo-ligase from Escherichia coli O127:H6 (strain E2348/69 / EPEC).